A 555-amino-acid chain; its full sequence is Oxygen-dependent choline dehydrogenase (555 aa).

Aspartate 4–glutamate 33 is an FAD binding site. The active-site Proton acceptor is the histidine 473.

Belongs to the GMC oxidoreductase family. FAD is required as a cofactor.

The catalysed reaction is choline + A = betaine aldehyde + AH2. It catalyses the reaction betaine aldehyde + NAD(+) + H2O = glycine betaine + NADH + 2 H(+). It functions in the pathway amine and polyamine biosynthesis; betaine biosynthesis via choline pathway; betaine aldehyde from choline (cytochrome c reductase route): step 1/1. Involved in the biosynthesis of the osmoprotectant glycine betaine. Catalyzes the oxidation of choline to betaine aldehyde and betaine aldehyde to glycine betaine at the same rate. The chain is Oxygen-dependent choline dehydrogenase from Proteus mirabilis (strain HI4320).